The primary structure comprises 663 residues: Beta-galactosidase YesZ (663 aa).

Arginine 106 lines the substrate pocket. Cysteine 110 provides a ligand contact to Zn(2+). Asparagine 144 lines the substrate pocket. The active-site Proton donor is the glutamate 145. Residues cysteine 153, cysteine 155, and cysteine 158 each coordinate Zn(2+). Glutamate 296 acts as the Nucleophile in catalysis. Position 345 to 348 (glutamate 345 to histidine 348) interacts with substrate.

The protein belongs to the glycosyl hydrolase 42 family. Homotrimer.

The enzyme catalyses Hydrolysis of terminal non-reducing beta-D-galactose residues in beta-D-galactosides.. Functionally, may play a role in the degradation of rhamnogalacturonan derived from plant cell walls. The protein is Beta-galactosidase YesZ (yesZ) of Bacillus subtilis (strain 168).